We begin with the raw amino-acid sequence, 387 residues long: Succinyl-diaminopimelate desuccinylase (387 aa).

Residue His-75 coordinates Zn(2+). The active site involves Asp-77. Asp-108 is a binding site for Zn(2+). The active-site Proton acceptor is the Glu-139. The Zn(2+) site is built by Glu-140, Glu-168, and His-357.

It belongs to the peptidase M20A family. DapE subfamily. Homodimer. Requires Zn(2+) as cofactor. The cofactor is Co(2+).

The catalysed reaction is N-succinyl-(2S,6S)-2,6-diaminopimelate + H2O = (2S,6S)-2,6-diaminopimelate + succinate. It participates in amino-acid biosynthesis; L-lysine biosynthesis via DAP pathway; LL-2,6-diaminopimelate from (S)-tetrahydrodipicolinate (succinylase route): step 3/3. Functionally, catalyzes the hydrolysis of N-succinyl-L,L-diaminopimelic acid (SDAP), forming succinate and LL-2,6-diaminopimelate (DAP), an intermediate involved in the bacterial biosynthesis of lysine and meso-diaminopimelic acid, an essential component of bacterial cell walls. This is Succinyl-diaminopimelate desuccinylase from Caulobacter sp. (strain K31).